Reading from the N-terminus, the 304-residue chain is Large ribosomal subunit protein uL2 (304 aa).

The tract at residues 246-282 (HTRGTAMNPVDHPHGGGEGRTRGKHPESPWGWKTKGY) is disordered. Over residues 256–272 (DHPHGGGEGRTRGKHPE) the composition is skewed to basic and acidic residues.

It belongs to the universal ribosomal protein uL2 family. In terms of assembly, part of the 50S ribosomal subunit. Forms a bridge to the 30S subunit in the 70S ribosome.

Its function is as follows. One of the primary rRNA binding proteins. Required for association of the 30S and 50S subunits to form the 70S ribosome, for tRNA binding and peptide bond formation. It has been suggested to have peptidyltransferase activity; this is somewhat controversial. Makes several contacts with the 16S rRNA in the 70S ribosome. This chain is Large ribosomal subunit protein uL2, found in Aquifex aeolicus (strain VF5).